The chain runs to 886 residues: MGARCRSFSALLLLLQVSSWLCQQPESESDSCRPGFSSEVYTFLVPERHLERGHILGRVKFEGCTGRPRTAFFSEDSRFKVSTDGVITVKRHLKLHKLETSFLVHAWDSSYRKLSTKVTLKSLGHHHHRHHHRDPVSESNPELLTFPSFHQGLRRQKRDWVIPPINCPENQKGEFPQRLVQIKSNRDKETTVFYSITGPGADKPPVGVFIIERETGWLKVTQPLDREAIDKYLLYSHAVSSNGEAVEDPMEIVVTVTDQNDNRPEFIQEVFEGSVAEGALPGTSVMQVSATDADDDINTYNAAIAYTILSQDPELPHKNMFTVNRDTGVISVVTSGLDRESYPTYTLVVQAADLQGEGLSTTAKAVITVKDINDNAPIFNPSTYQGQVLENEVGARIATLKVTDDDAPNTPAWNAVYTVVNDPDHQFTVITDPKTNEGILKTAKGLDFEAKQQYILHVTVENEEPFEGSLVPSTATVTVDVVDVNEAPIFVPAEKRVEVPEDFGVGLEIASYTAREPDTFMEQKITYRIWRDTANWLEINPETGVISTRAEMDREDSEHVKNSTYTALIIATDDGSPIATGTGTLLLVLSDVNDNAPIPEPRNMQFCQRNPKPHVITILDPDLPPNTSPFTAELTHGASVNWTIEYNDAEQESLILQPRKDLEIGEYKINLKLSDNQNKDQVTTLEVHVCDCEGTVNNCMKAISLEAGLQVPAILGILGGILALLILILLLLLFLRRRTVVKEPLLPPDDDTRDNVYYYDEEGGGEEDQDFDLSQLHRGLDARPEVIRNDVAPTLMSMPQYRPRPANPDEIGNFIDENLKAADSDPTAPPYDSLLVFDYEGSGSEAASLSSLNSSESDQDQDYDYLNEWGNRFKKLADMYGGGEED.

Residues 1 to 23 (MGARCRSFSALLLLLQVSSWLCQ) form the signal peptide. A propeptide spanning residues 24 to 158 (QPESESDSCR…FHQGLRRQKR (135 aa)) is cleaved from the precursor. The Extracellular portion of the chain corresponds to 24 to 713 (QPESESDSCR…SLEAGLQVPA (690 aa)). 5 consecutive Cadherin domains span residues 159 to 266 (DWVI…RPEF), 267 to 379 (IQEV…APIF), 380 to 490 (NPST…APIF), 491 to 597 (VPAE…DNAP), and 598 to 701 (IPEP…NCMK). D261 is a Ca(2+) binding site. S284 and S289 each carry an O-linked (Man...) serine glycan. D292 contacts Ca(2+). Residues T362, T474, T476, and T513 are each glycosylated (O-linked (Man...) threonine). N-linked (GlcNAc...) asparagine glycosylation occurs at N562. Residues T580, T582, and T584 are each glycosylated (O-linked (Man...) threonine). The N-linked (GlcNAc...) asparagine glycan is linked to N641. The chain crosses the membrane as a helical span at residues 714–734 (ILGILGGILALLILILLLLLF). Topologically, residues 735–886 (LRRRTVVKEP…ADMYGGGEED (152 aa)) are cytoplasmic. The tract at residues 751 to 771 (DTRDNVYYYDEEGGGEEDQDF) is disordered. Residues Y757, Y758, and Y759 each carry the phosphotyrosine; by SRC modification. Acidic residues predominate over residues 759–771 (YDEEGGGEEDQDF). The segment at 762-773 (EGGGEEDQDFDL) is required for binding CTNND1 and PSEN1. Residues S774, S797, S842, S844, and S850 each carry the phosphoserine modification. Residues 815 to 886 (IDENLKAADS…ADMYGGGEED (72 aa)) are required for binding alpha, beta and.

As to quaternary structure, homodimer; disulfide-linked. Component of an E-cadherin/ catenin adhesion complex composed of at least E-cadherin/CDH1, beta-catenin/CTNNB1 or gamma-catenin/JUP, and potentially alpha-catenin/CTNNA1; the complex is located to adherens junctions. Found in a complex composed of CDH1, RAP1A and PKP3; PKP3 acts as a scaffold protein within the complex, the complex is required for CDH1 localization to mature desmosome cell junctions. Interacts with the TRPV4 and CTNNB1 complex. Interacts with CTNND1. The stable association of CTNNA1 is controversial as CTNNA1 was shown not to bind to F-actin when assembled in the complex. Alternatively, the CTNNA1-containing complex may be linked to F-actin by other proteins such as LIMA1. Interaction with PSEN1, cleaves CDH1 resulting in the disassociation of cadherin-based adherens junctions (CAJs). Interacts with AJAP1 and DLGAP5. Interacts with TBC1D2. Interacts with LIMA1. Interacts with CAV1. Interacts with PIP5K1C. Interacts with DDR1; this stabilizes CDH1 at the cell surface and inhibits its internalization. Interacts with RAPGEF2. Interacts with RAB8B. Interacts with KLRG1. Forms a ternary complex composed of ADAM10, CADH1 and EPHA4; within the complex, CADH1 is cleaved by ADAM10 which disrupts adherens junctions. Interacts with SPEF1. Interacts with CTNNB1 and PKP2. Interacts with AMOTL2; the interaction may facilitate binding of radial actin fibers to cell junction complexes. Interacts with DSG3; the interaction is required for CDH1 localization to developing adherens junctions. During apoptosis or with calcium influx, cleaved by a membrane-bound metalloproteinase (ADAM10), PS1/gamma-secretase and caspase-3. Processing by the metalloproteinase, induced by calcium influx, causes disruption of cell-cell adhesion and the subsequent release of beta-catenin into the cytoplasm. The residual membrane-tethered cleavage product is rapidly degraded via an intracellular proteolytic pathway. Cleavage by caspase-3 releases the cytoplasmic tail resulting in disintegration of the actin microfilament system. The gamma-secretase-mediated cleavage promotes disassembly of adherens junctions. During development of the cochlear organ of Corti, cleavage by ADAM10 at adherens junctions promotes pillar cell separation. In terms of processing, N-glycosylation at Asn-641 is essential for expression, folding and trafficking. Addition of bisecting N-acetylglucosamine by MGAT3 modulates its cell membrane location. Post-translationally, ubiquitinated by a SCF complex containing SKP2, which requires prior phosphorylation by CK1/CSNK1A1. Ubiquitinated by CBLL1/HAKAI, requires prior phosphorylation at Tyr-758. O-glycosylated. O-manosylated by TMTC1, TMTC2, TMTC3 or TMTC4. Ser-289 and Thr-513 are O-manosylated by TMTC2 or TMTC4 but not TMTC1 or TMTC3.

It localises to the cell junction. The protein localises to the adherens junction. Its subcellular location is the cell membrane. It is found in the endosome. The protein resides in the golgi apparatus. It localises to the trans-Golgi network. The protein localises to the cytoplasm. Its subcellular location is the desmosome. Cadherins are calcium-dependent cell adhesion proteins. They preferentially interact with themselves in a homophilic manner in connecting cells; cadherins may thus contribute to the sorting of heterogeneous cell types. CDH1 is involved in mechanisms regulating cell-cell adhesions, mobility and proliferation of epithelial cells. Promotes organization of radial actin fiber structure and cellular response to contractile forces, via its interaction with AMOTL2 which facilitates anchoring of radial actin fibers to CDH1 junction complexes at the cell membrane. Plays a role in the early stages of desmosome cell-cell junction formation via facilitating the recruitment of DSG2 and DSP to desmosome plaques. Has a potent invasive suppressor role. It is a ligand for integrin alpha-E/beta-7. Functionally, E-Cad/CTF2 promotes non-amyloidogenic degradation of Abeta precursors. Has a strong inhibitory effect on APP C99 and C83 production. This Rattus norvegicus (Rat) protein is Cadherin-1 (Cdh1).